Here is a 66-residue protein sequence, read N- to C-terminus: uncharacterized protein (66 aa).

Low complexity predominate over residues 1-18 (MSTTSSSSTFSTRTASLS). The tract at residues 1-22 (MSTTSSSSTFSTRTASLSQSYT) is disordered.

This is an uncharacterized protein from Schizosaccharomyces pombe (strain 972 / ATCC 24843) (Fission yeast).